A 299-amino-acid polypeptide reads, in one-letter code: B-box zinc finger protein 22 (299 aa).

The Zn(2+) site is built by cysteine 5, cysteine 8, cysteine 28, histidine 33, cysteine 57, cysteine 60, cysteine 80, and histidine 85. The B box-type 1; atypical zinc-finger motif lies at 5–47; the sequence is CNVCEAAEATVLCCADEAALCWACDEKIHAANKLAGKHQRVPL. The B box-type 2; atypical zinc-finger motif lies at 57-99; sequence CDICQEASGFFFCLQDRALLCRKCDVAIHTVNPHVSAHQRFLL. Disordered stretches follow at residues 143 to 181 and 206 to 299; these read FDHH…GSTT and ENNG…RRRF. 3 stretches are compositionally biased toward polar residues: residues 164–181, 251–260, and 277–290; these read VNDQ…GSTT, QIQSPPTASG, and ITSS…SPNQ.

In terms of assembly, interacts with HY5. In terms of processing, ubiquitinated by COP1 in vitro. COP1-mediated degradation of BBX22 by the proteasome occurs in the dark and is important for a precise skotomorphogenesis process and optimization of seedling growth under short days conditions.

The protein localises to the nucleus. In terms of biological role, acts as a positive regulator of seedling photomorphogenesis and light-regulated inhibition of hypocotyl elongation, independently and in concert with HY5 and BBX21. Acts as a positive regulator of de-etiolation and influences chloroplast biogenesis and function through regulation of genes encoding chloroplast proteins. Acts downstream of COP1 and plays an important role in early and long-term adjustment of the shade avoidance syndrome (SAS) responses in natural environments. Regulates the expression of genes responsive to light hormone signals which may contribute to optimal seedling development. This is B-box zinc finger protein 22 from Arabidopsis thaliana (Mouse-ear cress).